A 424-amino-acid polypeptide reads, in one-letter code: UDP-glycosyltransferase 76H1 (424 aa).

UDP-alpha-D-glucose is bound by residues serine 248, 306-307 (WA), 324-332 (HCGWNSTIE), and 346-349 (FADQ).

It belongs to the UDP-glycosyltransferase family.

Functionally, may glycosylate diterpenes or flavonols in leaves. This chain is UDP-glycosyltransferase 76H1, found in Stevia rebaudiana (Stevia).